The sequence spans 201 residues: Recombination protein RecR (201 aa).

Residues 57 to 72 form a C4-type zinc finger; that stretch reads CADCRTFTEQPVCTIC. The region spanning 81 to 176 is the Toprim domain; the sequence is GQICVVESPA…MASRIAHGVP (96 aa).

It belongs to the RecR family.

Its function is as follows. May play a role in DNA repair. It seems to be involved in an RecBC-independent recombinational process of DNA repair. It may act with RecF and RecO. This chain is Recombination protein RecR, found in Sodalis glossinidius (strain morsitans).